Consider the following 198-residue polypeptide: Probable GTP-binding protein EngB (198 aa).

One can recognise an EngB-type G domain in the interval 22–195 (DLPEIALAGR…WKAIHKFTKT (174 aa)). GTP contacts are provided by residues 30-37 (GRSNVGKS), 57-61 (GKTQT), 75-78 (DVPG), 142-145 (TKAD), and 174-176 (FSS). Serine 37 and threonine 59 together coordinate Mg(2+).

This sequence belongs to the TRAFAC class TrmE-Era-EngA-EngB-Septin-like GTPase superfamily. EngB GTPase family. Requires Mg(2+) as cofactor.

Its function is as follows. Necessary for normal cell division and for the maintenance of normal septation. The sequence is that of Probable GTP-binding protein EngB from Bacillus cytotoxicus (strain DSM 22905 / CIP 110041 / 391-98 / NVH 391-98).